Consider the following 672-residue polypeptide: Acetyl-coenzyme A synthetase (672 aa).

Residues 217 to 220 (RRGK) and T335 each bind CoA. Residues 411–413 (GEP), 435–440 (DTWWQT), D529, R544, and R555 each bind ATP. Positions 566, 568, and 571 each coordinate Mg(2+). R613 contributes to the CoA binding site. K638 carries the N6-acetyllysine modification.

It belongs to the ATP-dependent AMP-binding enzyme family. Mg(2+) is required as a cofactor. Acetylated. Deacetylation by the SIR2-homolog deacetylase activates the enzyme. In terms of processing, the N-terminus is blocked.

The enzyme catalyses acetate + ATP + CoA = acetyl-CoA + AMP + diphosphate. Functionally, catalyzes the conversion of acetate into acetyl-CoA (AcCoA), an essential intermediate at the junction of anabolic and catabolic pathways. AcsA undergoes a two-step reaction. In the first half reaction, AcsA combines acetate with ATP to form acetyl-adenylate (AcAMP) intermediate. In the second half reaction, it can then transfer the acetyl group from AcAMP to the sulfhydryl group of CoA, forming the product AcCoA. This is Acetyl-coenzyme A synthetase from Methanothrix soehngenii (Methanosaeta concilii).